The following is a 31-amino-acid chain: Cyclotide glopa C (31 aa).

The segment at residues 1-31 (GDLPICGETCFEGGNCRIPGCTCVWPFCSKN) is a cross-link (cyclopeptide (Gly-Asn)). Disulfide bonds link C6–C21, C10–C23, and C16–C28.

In terms of processing, this is a cyclic peptide.

Functionally, probably participates in a plant defense mechanism. The protein is Cyclotide glopa C of Gloeospermum pauciflorum.